The following is a 423-amino-acid chain: GTPase Obg (423 aa).

Residues 1–158 enclose the Obg domain; it reads MFYDEAKIYV…RWLVLELKLL (158 aa). An OBG-type G domain is found at 159–328; it reads ADVGLIGLPN…LLYHVSGLLA (170 aa). GTP-binding positions include 165-172, 190-194, 212-215, 281-284, and 309-311; these read GLPNAGKS, FTTLT, DIPG, NKMD, and SAA. Mg(2+) is bound by residues S172 and T192. Residues 336–421 enclose the OCT domain; it reads VTAPEEEKVT…IGKFEFEYVE (86 aa).

It belongs to the TRAFAC class OBG-HflX-like GTPase superfamily. OBG GTPase family. In terms of assembly, monomer. Requires Mg(2+) as cofactor.

Its subcellular location is the cytoplasm. In terms of biological role, an essential GTPase which binds GTP, GDP and possibly (p)ppGpp with moderate affinity, with high nucleotide exchange rates and a fairly low GTP hydrolysis rate. Plays a role in control of the cell cycle, stress response, ribosome biogenesis and in those bacteria that undergo differentiation, in morphogenesis control. The chain is GTPase Obg from Moorella thermoacetica (strain ATCC 39073 / JCM 9320).